Reading from the N-terminus, the 326-residue chain is 3-dehydrosphinganine reductase TSC10A (326 aa).

The Lumenal segment spans residues 1–7 (MAAISPL). The helical transmembrane segment at 8–28 (FLLFLIPIIPLSLLAILALIV) threads the bilayer. The Cytoplasmic portion of the chain corresponds to 29–264 (RPRPIKIPIK…KAMDGIKAGN (236 aa)). NADPH contacts are provided by glycine 46, serine 48, serine 49, glycine 50, arginine 71, lysine 75, and aspartate 97. Residues 46–50 (GGSSG) carry the GXSXG motif. The active-site Proton donor is the serine 174. Tyrosine 188 functions as the Proton acceptor in the catalytic mechanism. NADP(+)-binding residues include tyrosine 188 and lysine 192. Catalysis depends on lysine 192, which acts as the Lowers pKa of active site Tyr. Residues 265-285 (FTVSCNFEGFLLSLATTGMSP) traverse the membrane as a helical segment. Residues 286 to 288 (QRS) are Lumenal-facing. A helical membrane pass occupies residues 289–309 (FWLAFLEVITAGPIRLIALFF). The Cytoplasmic portion of the chain corresponds to 310-326 (QWDWYKAIEKWSKTKTK).

It belongs to the short-chain dehydrogenases/reductases (SDR) family. As to expression, expressed in roots, leaves, stems, flowers and siliques.

It is found in the endoplasmic reticulum membrane. It carries out the reaction sphinganine + NADP(+) = 3-oxosphinganine + NADPH + H(+). It participates in lipid metabolism; sphingolipid metabolism. Its function is as follows. Catalyzes the reduction of 3'-oxosphinganine (3-ketodihydrosphingosine/KDS) to sphinganine (dihydrosphingosine/DHS), the second step of de novo sphingolipid biosynthesis. In plants, sphingolipids seems to play a critical role in mineral ion homeostasis, most likely through their involvement in the ion transport functionalities of membrane systems in the root. Lacks stereospecificity and can also produce L-threo-DHS in addition to D-erythro-DHS. This chain is 3-dehydrosphinganine reductase TSC10A (TSC10A), found in Arabidopsis thaliana (Mouse-ear cress).